The primary structure comprises 287 residues: Phospholipase A and acyltransferase 5 (287 aa).

2 disordered regions span residues 48-72 (PKQISRTASTESSDTQPTNDSASSQ) and 86-138 (DRGL…SNQK). Composition is skewed to polar residues over residues 49-72 (KQISRTASTESSDTQPTNDSASSQ) and 128-138 (LKNQAAESNQK). Positions 144 to 257 (LIEIFRIGYE…LRYGVPRSQQ (114 aa)) constitute an LRAT domain. Catalysis depends on residues histidine 154 and histidine 166. Residue cysteine 241 is the Acyl-thioester intermediate of the active site.

The protein belongs to the H-rev107 family. Expressed in testis.

The protein resides in the cytoplasm. Its subcellular location is the cytosol. It catalyses the reaction a 1,2-diacyl-sn-glycero-3-phosphocholine + H2O = a 1-acyl-sn-glycero-3-phosphocholine + a fatty acid + H(+). The catalysed reaction is a 1,2-diacyl-sn-glycero-3-phosphocholine + H2O = a 2-acyl-sn-glycero-3-phosphocholine + a fatty acid + H(+). The enzyme catalyses 1-hexadecanoyl-2-(5Z,8Z,11Z,14Z-eicosatetraenoyl)-sn-glycero-3-phosphocholine + 1,2-di-(9Z-octadecenoyl)-sn-glycero-3-phosphoethanolamine = N-(5Z,8Z,11Z,14Z-eicosatetraenoyl)-1,2-di-(9Z-octadecenoyl)-sn-glycero-3-phosphoethanolamine + 1-hexadecanoyl-sn-glycero-3-phosphocholine + H(+). It carries out the reaction 1,2-di-(9Z-octadecenoyl)-sn-glycero-3-phosphoethanolamine + 1,2-dihexadecanoyl-sn-glycero-3-phosphocholine = N-hexadecanoyl-1,2-di-(9Z-octadecenoyl)-sn-glycero-3-phosphoethanolamine + 1-hexadecanoyl-sn-glycero-3-phosphocholine + H(+). It catalyses the reaction 1,2-di-(9Z-octadecenoyl)-sn-glycero-3-phosphoethanolamine + 1,2-dihexadecanoyl-sn-glycero-3-phosphocholine = N-hexadecanoyl-1,2-di-(9Z-octadecenoyl)-sn-glycero-3-phosphoethanolamine + 2-hexadecanoyl-sn-glycero-3-phosphocholine + H(+). The catalysed reaction is a 1,2-diacyl-sn-glycero-3-phosphoethanolamine + a 1,2-diacyl-sn-glycero-3-phosphocholine = an N-acyl-1,2-diacyl-sn-glycero-3-phosphoethanolamine + a 1-acyl-sn-glycero-3-phosphocholine + H(+). The enzyme catalyses a 1,2-diacyl-sn-glycero-3-phosphoethanolamine + a 1,2-diacyl-sn-glycero-3-phosphocholine = an N-acyl-1,2-diacyl-sn-glycero-3-phosphoethanolamine + a 2-acyl-sn-glycero-3-phosphocholine + H(+). It carries out the reaction 1-hexadecanoyl-2-(9Z-octadecenoyl)-sn-glycero-3-phosphocholine + 1,2-di-(9Z-octadecenoyl)-sn-glycero-3-phosphoethanolamine = N,1,2-tri-(9Z-octadecenoyl)-sn-glycero-3-phosphoethanolamine + 1-hexadecanoyl-sn-glycero-3-phosphocholine + H(+). Exhibits both phospholipase A1/2 and acyltransferase activities. Shows phospholipase A1 (PLA1) and A2 (PLA2) activity, catalyzing the calcium-independent release of fatty acids from the sn-1 or sn-2 position of glycerophospholipids. Shows N-acyltransferase activity, catalyzing the calcium-independent transfer of a fatty acyl group at the sn-1 position of phosphatidylcholine (PC) and other glycerophospholipids to the primary amine of phosphatidylethanolamine (PE), forming N-acylphosphatidylethanolamine (NAPE), which serves as precursor for N-acylethanolamines (NAEs). The protein is Phospholipase A and acyltransferase 5 of Rattus norvegicus (Rat).